A 790-amino-acid polypeptide reads, in one-letter code: Cadherin-20 (790 aa).

The first 25 residues, 1-25, serve as a signal peptide directing secretion; the sequence is MSCKRSYHRHCALVYYMVLLDLTNA. Positions 26–52 are excised as a propeptide; the sequence is VFEFSHPLIRDSGNSQSRQLLHHRLKR. Residues 26-612 lie on the Extracellular side of the membrane; the sequence is VFEFSHPLIR…PYTLPISLSR (587 aa). 5 consecutive Cadherin domains span residues 54–158, 159–267, 268–382, 383–487, and 487–605; these read WVWN…EPKF, LDGP…PPRF, PQKH…PPVF, GSSF…APTF, and FTKF…EPYT. Asn-254, Asn-283, Asn-413, Asn-454, and Asn-535 each carry an N-linked (GlcNAc...) asparagine glycan. Residues 613–633 traverse the membrane as a helical segment; sequence GALIAILTCIFVLLVLVLLIL. Over 634 to 790 the chain is Cytoplasmic; it reads SMRRHRKQPY…YGTKDNNGSL (157 aa).

In terms of tissue distribution, detected in embryonic posterior neural plate, embryonic neural tube, sulcus limitans and embryonic kidney.

The protein resides in the cell membrane. In terms of biological role, cadherins are calcium-dependent cell adhesion proteins. They preferentially interact with themselves in a homophilic manner in connecting cells; cadherins may thus contribute to the sorting of heterogeneous cell types. The sequence is that of Cadherin-20 (cdh20) from Xenopus laevis (African clawed frog).